Reading from the N-terminus, the 339-residue chain is Phenylalanine--tRNA ligase alpha subunit (339 aa).

Position 254 (Glu254) interacts with Mg(2+).

This sequence belongs to the class-II aminoacyl-tRNA synthetase family. Phe-tRNA synthetase alpha subunit type 1 subfamily. Tetramer of two alpha and two beta subunits. It depends on Mg(2+) as a cofactor.

The protein resides in the cytoplasm. It catalyses the reaction tRNA(Phe) + L-phenylalanine + ATP = L-phenylalanyl-tRNA(Phe) + AMP + diphosphate + H(+). The polypeptide is Phenylalanine--tRNA ligase alpha subunit (Clostridium perfringens (strain SM101 / Type A)).